Here is a 324-residue protein sequence, read N- to C-terminus: Bacilliredoxin reductase Bdr (324 aa).

Cysteine 220 bears the S-bacillithiol cysteine disulfide mark.

In terms of assembly, interacts with BrxC. Requires FAD as cofactor. Post-translationally, C-terminal Cys can react with bacillithiol (BSH) to form mixed disulfides. S-bacillithiolation protects Cys residues against overoxidation by acting as a redox switch in response to oxidative stress.

In terms of biological role, S-bacillithiolation is the formation of mixed disulfide bonds between protein thiols and the general thiol reductant bacillithiol (BSH) under oxidative stress. BSH is an equivalent of glutathione (GSH) in Firmicutes. This protein is a NADPH-dependent bacilliredoxin reductase, which debacillithiolates (removes BSH) the S-bacillithiolated BrxB (BrxB-SSB), and to a lesser extent BrxC (BrxC-SSB). Involved in a redox cascade increasing the efficacy of BrxB function by reducing BrxB-SSB and thus reactivating it. Has NADPH-dependent oxidase activity under aerobic conditions producing hydrogen peroxide (H(2)O(2)). In Bacillus subtilis (strain 168), this protein is Bacilliredoxin reductase Bdr.